The chain runs to 327 residues: Ribose 1,5-bisphosphate isomerase (327 aa).

Residues 25–28 and arginine 68 contribute to the substrate site; that span reads RGAA. Residue cysteine 133 is the Proton acceptor of the active site. Aspartate 202 (proton donor) is an active-site residue. Substrate is bound by residues 212–213 and lysine 238; that span reads NK.

It belongs to the eIF-2B alpha/beta/delta subunits family. R15P isomerase subfamily.

The enzyme catalyses alpha-D-ribose 1,5-bisphosphate = D-ribulose 1,5-bisphosphate. Its function is as follows. Isomerase involved in the non-carboxylating pentose bisphosphate pathway, a nucleoside degradation pathway present in some halophilic archaea. Catalyzes the isomerization of ribose 1,5-bisphosphate (R15P) to ribulose 1,5-bisphosphate (RuBP). This chain is Ribose 1,5-bisphosphate isomerase, found in Haloterrigena turkmenica (strain ATCC 51198 / DSM 5511 / JCM 9101 / NCIMB 13204 / VKM B-1734 / 4k) (Halococcus turkmenicus).